A 161-amino-acid polypeptide reads, in one-letter code: Large ribosomal subunit protein uL10 (161 aa).

Belongs to the universal ribosomal protein uL10 family. As to quaternary structure, part of the ribosomal stalk of the 50S ribosomal subunit. The N-terminus interacts with L11 and the large rRNA to form the base of the stalk. The C-terminus forms an elongated spine to which L12 dimers bind in a sequential fashion forming a multimeric L10(L12)X complex.

Functionally, forms part of the ribosomal stalk, playing a central role in the interaction of the ribosome with GTP-bound translation factors. This chain is Large ribosomal subunit protein uL10, found in Sulfurovum sp. (strain NBC37-1).